The following is a 424-amino-acid chain: Pachytene checkpoint protein 2 homolog (424 aa).

Residue 171–178 (GPPGTGKT) coordinates ATP.

This sequence belongs to the AAA ATPase family. PCH2 subfamily.

In terms of biological role, plays a key role in chromosome recombination and chromosome structure development during meiosis. Required at early steps in meiotic recombination that leads to non-crossovers pathways. Also needed for efficient completion of homologous synapsis by influencing crossover distribution along the chromosomes affecting both crossovers and non-crossovers pathways. The sequence is that of Pachytene checkpoint protein 2 homolog (trip13) from Danio rerio (Zebrafish).